The primary structure comprises 399 residues: Tyrosine--tRNA ligase 2 (399 aa).

The short motif at 43–52 (PTAPDLHLGH) is the 'HIGH' region element. A 'KMSKS' region motif is present at residues 227-231 (KMSKS). Lys-230 is an ATP binding site. The region spanning 338 to 398 (ITLLDLCSVA…IGKRYKFRIG (61 aa)) is the S4 RNA-binding domain.

The protein belongs to the class-I aminoacyl-tRNA synthetase family. TyrS type 2 subfamily. In terms of assembly, homodimer.

The protein localises to the cytoplasm. It carries out the reaction tRNA(Tyr) + L-tyrosine + ATP = L-tyrosyl-tRNA(Tyr) + AMP + diphosphate + H(+). Functionally, catalyzes the attachment of tyrosine to tRNA(Tyr) in a two-step reaction: tyrosine is first activated by ATP to form Tyr-AMP and then transferred to the acceptor end of tRNA(Tyr). In Photorhabdus laumondii subsp. laumondii (strain DSM 15139 / CIP 105565 / TT01) (Photorhabdus luminescens subsp. laumondii), this protein is Tyrosine--tRNA ligase 2.